A 436-amino-acid polypeptide reads, in one-letter code: Phosphomethylpyrimidine synthase (436 aa).

Substrate-binding positions include Asn69, Met98, Tyr127, His163, 185-187 (SRG), 226-229 (DACR), and Glu265. His269 lines the Zn(2+) pocket. Tyr292 lines the substrate pocket. His333 provides a ligand contact to Zn(2+). Residues Cys409, Cys412, and Cys416 each contribute to the [4Fe-4S] cluster site.

It belongs to the ThiC family. [4Fe-4S] cluster is required as a cofactor.

The catalysed reaction is 5-amino-1-(5-phospho-beta-D-ribosyl)imidazole + S-adenosyl-L-methionine = 4-amino-2-methyl-5-(phosphooxymethyl)pyrimidine + CO + 5'-deoxyadenosine + formate + L-methionine + 3 H(+). It functions in the pathway cofactor biosynthesis; thiamine diphosphate biosynthesis. In terms of biological role, catalyzes the synthesis of the hydroxymethylpyrimidine phosphate (HMP-P) moiety of thiamine from aminoimidazole ribotide (AIR) in a radical S-adenosyl-L-methionine (SAM)-dependent reaction. This is Phosphomethylpyrimidine synthase from Clostridium acetobutylicum (strain ATCC 824 / DSM 792 / JCM 1419 / IAM 19013 / LMG 5710 / NBRC 13948 / NRRL B-527 / VKM B-1787 / 2291 / W).